We begin with the raw amino-acid sequence, 108 residues long: Nucleoid-associated protein HCH_02614 (108 aa).

Belongs to the YbaB/EbfC family. As to quaternary structure, homodimer.

It localises to the cytoplasm. Its subcellular location is the nucleoid. In terms of biological role, binds to DNA and alters its conformation. May be involved in regulation of gene expression, nucleoid organization and DNA protection. The polypeptide is Nucleoid-associated protein HCH_02614 (Hahella chejuensis (strain KCTC 2396)).